The following is a 379-amino-acid chain: Putative glutamate--cysteine ligase 2 (379 aa).

The protein belongs to the glutamate--cysteine ligase type 2 family. YbdK subfamily.

It catalyses the reaction L-cysteine + L-glutamate + ATP = gamma-L-glutamyl-L-cysteine + ADP + phosphate + H(+). Its function is as follows. ATP-dependent carboxylate-amine ligase which exhibits weak glutamate--cysteine ligase activity. This is Putative glutamate--cysteine ligase 2 from Roseiflexus sp. (strain RS-1).